A 262-amino-acid chain; its full sequence is 2-oxo-tetronate isomerase (262 aa).

Residue E143 is the Proton donor/acceptor of the active site. 4 residues coordinate Mg(2+): E143, D178, Q204, and E240. Catalysis depends on E240, which acts as the Proton donor/acceptor.

Belongs to the hyi family. OtnI subfamily.

The catalysed reaction is 2-dehydro-L-erythronate = 3-dehydro-L-erythronate. The enzyme catalyses 2-dehydro-D-erythronate = 3-dehydro-D-erythronate. Catalyzes the isomerization of 2-oxo-tetronate to 3-oxo-tetronate. This chain is 2-oxo-tetronate isomerase, found in Pectobacterium atrosepticum (strain SCRI 1043 / ATCC BAA-672) (Erwinia carotovora subsp. atroseptica).